Here is a 213-residue protein sequence, read N- to C-terminus: Large ribosomal subunit protein uL1 (213 aa).

It belongs to the universal ribosomal protein uL1 family. Part of the 50S ribosomal subunit.

Functionally, binds directly to 23S rRNA. Probably involved in E site tRNA release. In terms of biological role, protein L1 is also a translational repressor protein, it controls the translation of its operon by binding to its mRNA. This Methanococcoides burtonii (strain DSM 6242 / NBRC 107633 / OCM 468 / ACE-M) protein is Large ribosomal subunit protein uL1.